A 437-amino-acid chain; its full sequence is Serine carboxypeptidase-like 17 (437 aa).

An N-terminal signal peptide occupies residues 1–26; sequence MGKECYYLSWILKFHLLLVLIQLVDS. Intrachain disulfides connect Cys85-Cys327, Cys249-Cys263, and Cys287-Cys293. N-linked (GlcNAc...) asparagine glycosylation occurs at Asn106. Ser181 is a catalytic residue. Asp362 is a catalytic residue. N-linked (GlcNAc...) asparagine glycosylation occurs at Asn378. His415 is an active-site residue.

The protein belongs to the peptidase S10 family. As to expression, expressed in seedlings and siliques.

The protein resides in the secreted. Functionally, probable carboxypeptidase. This is Serine carboxypeptidase-like 17 (SCPL17) from Arabidopsis thaliana (Mouse-ear cress).